A 404-amino-acid chain; its full sequence is Zinc finger CCCH domain-containing protein 15 homolog (404 aa).

Positions 1–10 (MPPKKAPPGP) are enriched in pro residues. Residues 1 to 71 (MPPKKAPPGP…KRKEEKEKKL (71 aa)) form a disordered region. Basic and acidic residues predominate over residues 12–28 (KKTEQKKKEKVIEDKTF). Low complexity predominate over residues 38–50 (QQKFIQQVQKQVQ). Positions 56–71 (PRQDGDKRKEEKEKKL) are enriched in basic and acidic residues. 2 consecutive C3H1-type zinc fingers follow at residues 94 to 121 (DPKS…HDLS) and 165 to 202 (PTTD…HALP). A Phosphothreonine modification is found at Thr-218. The residue at position 221 (Ser-221) is a Phosphoserine. Positions 246 to 270 (LAWKKRKIAEKKAKLAAEEERKKSD) form a coiled coil. 2 stretches are compositionally biased toward low complexity: residues 352 to 361 (EAAKTAAAED) and 369 to 380 (PSSSAPANDAAP). Residues 352-380 (EAAKTAAAEDAAADEDGPSSSAPANDAAP) are disordered.

This sequence belongs to the ZC3H15/TMA46 family.

The sequence is that of Zinc finger CCCH domain-containing protein 15 homolog from Drosophila melanogaster (Fruit fly).